The primary structure comprises 164 residues: Transcriptional regulator MraZ (164 aa).

2 SpoVT-AbrB domains span residues 7–60 (HYTN…EIDG) and 83–126 (SEIL…EPGR). A disordered region spans residues 144-164 (QLSARHAAPDAPPLRSHGARE).

It belongs to the MraZ family. Forms oligomers.

The protein localises to the cytoplasm. It is found in the nucleoid. In Methylocella silvestris (strain DSM 15510 / CIP 108128 / LMG 27833 / NCIMB 13906 / BL2), this protein is Transcriptional regulator MraZ.